The primary structure comprises 364 residues: Methylthioribose-1-phosphate isomerase (364 aa).

The active-site Proton donor is D254.

It belongs to the eIF-2B alpha/beta/delta subunits family. MtnA subfamily.

The protein localises to the cytoplasm. It is found in the nucleus. It carries out the reaction 5-(methylsulfanyl)-alpha-D-ribose 1-phosphate = 5-(methylsulfanyl)-D-ribulose 1-phosphate. The protein operates within amino-acid biosynthesis; L-methionine biosynthesis via salvage pathway; L-methionine from S-methyl-5-thio-alpha-D-ribose 1-phosphate: step 1/6. Its function is as follows. Catalyzes the interconversion of methylthioribose-1-phosphate (MTR-1-P) into methylthioribulose-1-phosphate (MTRu-1-P). This is Methylthioribose-1-phosphate isomerase from Drosophila erecta (Fruit fly).